The following is a 345-amino-acid chain: Aspartate--ammonia ligase (345 aa).

This sequence belongs to the class-II aminoacyl-tRNA synthetase family. AsnA subfamily.

Its subcellular location is the cytoplasm. It carries out the reaction L-aspartate + NH4(+) + ATP = L-asparagine + AMP + diphosphate + H(+). Its pathway is amino-acid biosynthesis; L-asparagine biosynthesis; L-asparagine from L-aspartate (ammonia route): step 1/1. This is Aspartate--ammonia ligase from Bacteroides thetaiotaomicron (strain ATCC 29148 / DSM 2079 / JCM 5827 / CCUG 10774 / NCTC 10582 / VPI-5482 / E50).